We begin with the raw amino-acid sequence, 337 residues long: N-acetyl-gamma-glutamyl-phosphate reductase (337 aa).

Cys-145 is an active-site residue.

It belongs to the NAGSA dehydrogenase family. Type 1 subfamily.

It localises to the cytoplasm. The catalysed reaction is N-acetyl-L-glutamate 5-semialdehyde + phosphate + NADP(+) = N-acetyl-L-glutamyl 5-phosphate + NADPH + H(+). It functions in the pathway amino-acid biosynthesis; L-arginine biosynthesis; N(2)-acetyl-L-ornithine from L-glutamate: step 3/4. Catalyzes the NADPH-dependent reduction of N-acetyl-5-glutamyl phosphate to yield N-acetyl-L-glutamate 5-semialdehyde. The polypeptide is N-acetyl-gamma-glutamyl-phosphate reductase (Methanosarcina barkeri (strain Fusaro / DSM 804)).